We begin with the raw amino-acid sequence, 333 residues long: Ephrin-B2 (333 aa).

The N-terminal stretch at 1–27 (MAVRRDSVWKYCWGVLMVLCRTAISKS) is a signal peptide. Residues 28 to 164 (IVLEPIYWNS…TRAMKILMKV (137 aa)) enclose the Ephrin RBD domain. At 28-229 (IVLEPIYWNS…ILGSEVALFA (202 aa)) the chain is on the extracellular side. Asn-36 is a glycosylation site (N-linked (GlcNAc...) asparagine). Cystine bridges form between Cys-62/Cys-101 and Cys-89/Cys-153. An N-linked (GlcNAc...) asparagine glycan is attached at Asn-139. Residues 165 to 213 (GQDASSAGSTRNKDPTRRPELEAGTNGRSSTTSPFVKPNPGSSTDGNSA) form a disordered region. The segment covering 175-185 (RNKDPTRRPEL) has biased composition (basic and acidic residues). Positions 190-213 (NGRSSTTSPFVKPNPGSSTDGNSA) are enriched in polar residues. A helical transmembrane segment spans residues 230 to 250 (GIASGCIIFIVIIITLVVLLL). Over 251–333 (KYRRRHRKHS…QSPANIYYKV (83 aa)) the chain is Cytoplasmic. A Phosphoserine modification is found at Ser-260. Thr-274 carries the phosphothreonine modification. Arg-277 carries the omega-N-methylarginine modification. Positions 331–333 (YKV) match the PDZ-binding motif.

It belongs to the ephrin family. In terms of assembly, interacts with PDZRN3. Binds to the receptor tyrosine kinases EPHA4, EPHB4 and EPHA3. As to quaternary structure, (Microbial infection) Interacts with Hendra virus and Nipah virus G protein. In terms of processing, inducible phosphorylation of tyrosine residues in the cytoplasmic domain. As to expression, lung and kidney.

The protein localises to the cell membrane. Its subcellular location is the cell junction. The protein resides in the adherens junction. Functionally, cell surface transmembrane ligand for Eph receptors, a family of receptor tyrosine kinases which are crucial for migration, repulsion and adhesion during neuronal, vascular and epithelial development. Binds promiscuously Eph receptors residing on adjacent cells, leading to contact-dependent bidirectional signaling into neighboring cells. The signaling pathway downstream of the receptor is referred to as forward signaling while the signaling pathway downstream of the ephrin ligand is referred to as reverse signaling. Binds to receptor tyrosine kinase including EPHA4, EPHA3 and EPHB4. Together with EPHB4 plays a central role in heart morphogenesis and angiogenesis through regulation of cell adhesion and cell migration. EPHB4-mediated forward signaling controls cellular repulsion and segregation from EFNB2-expressing cells. May play a role in constraining the orientation of longitudinally projecting axons. Its function is as follows. (Microbial infection) Acts as a receptor for Hendra virus and Nipah virus. In Homo sapiens (Human), this protein is Ephrin-B2 (EFNB2).